We begin with the raw amino-acid sequence, 109 residues long: Small ribosomal subunit protein uS17 (109 aa).

Belongs to the universal ribosomal protein uS17 family. As to quaternary structure, part of the 30S ribosomal subunit.

In terms of biological role, one of the primary rRNA binding proteins, it binds specifically to the 5'-end of 16S ribosomal RNA. In Methanococcus maripaludis (strain DSM 14266 / JCM 13030 / NBRC 101832 / S2 / LL), this protein is Small ribosomal subunit protein uS17.